The primary structure comprises 274 residues: Centriolar and ciliogenesis-associated protein hyls-1 (274 aa).

Disordered stretches follow at residues 156 to 188 and 255 to 274; these read RSSVDDEENIAESVSVGLSTETEQSELQKSSRP and NNEDWKANHDKDWSPRPYID. The segment covering 171–183 has biased composition (polar residues); that stretch reads VGLSTETEQSELQ. A compositionally biased stretch (basic and acidic residues) spans 257–274; the sequence is EDWKANHDKDWSPRPYID.

This sequence belongs to the HYLS1 family. In terms of assembly, interacts with sas-4; leading to its localization into newly forming centrioles.

It localises to the cytoplasm. The protein resides in the cytoskeleton. Its subcellular location is the microtubule organizing center. The protein localises to the centrosome. It is found in the centriole. It localises to the cell projection. The protein resides in the cilium. In terms of biological role, plays an important role in ciliogenesis. This chain is Centriolar and ciliogenesis-associated protein hyls-1, found in Caenorhabditis elegans.